The primary structure comprises 386 residues: S-adenosylmethionine synthase (386 aa).

Position 8 (Glu-8) interacts with Mg(2+). His-14 is an ATP binding site. Glu-42 contacts K(+). Residues Glu-55 and Gln-98 each coordinate L-methionine. ATP contacts are provided by residues 166-168 (DGK), 234-237 (SGRF), Asp-245, 251-252 (RK), Ala-268, Lys-272, and Lys-276. Asp-245 lines the L-methionine pocket. Residue Lys-276 participates in L-methionine binding.

It belongs to the AdoMet synthase family. In terms of assembly, homotetramer. Mn(2+) serves as cofactor. It depends on Mg(2+) as a cofactor. The cofactor is Co(2+). Requires K(+) as cofactor.

The protein localises to the cytoplasm. The enzyme catalyses L-methionine + ATP + H2O = S-adenosyl-L-methionine + phosphate + diphosphate. It functions in the pathway amino-acid biosynthesis; S-adenosyl-L-methionine biosynthesis; S-adenosyl-L-methionine from L-methionine: step 1/1. Functionally, catalyzes the formation of S-adenosylmethionine from methionine and ATP. The reaction comprises two steps that are both catalyzed by the same enzyme: formation of S-adenosylmethionine (AdoMet) and triphosphate, and subsequent hydrolysis of the triphosphate. The sequence is that of S-adenosylmethionine synthase (METK) from Ostreococcus tauri.